A 565-amino-acid chain; its full sequence is Frizzled-2 (565 aa).

The signal sequence occupies residues 1–23 (MRPRSALPRLLLPLLLLPAAGPA). Residues 24 to 247 (QFHGEKGISI…QEETRFARLW (224 aa)) are Extracellular-facing. The FZ domain occupies 34-153 (PDHGFCQPIS…HGAEQICVGQ (120 aa)). Intrachain disulfides connect Cys-39-Cys-100, Cys-47-Cys-93, Cys-84-Cys-121, Cys-110-Cys-150, and Cys-114-Cys-138. Asn-53 is a glycosylation site (N-linked (GlcNAc...) asparagine). N-linked (GlcNAc...) asparagine glycosylation occurs at Asn-154. The interval 160 to 189 (APALLTTAPPPGLQPGAGGTPGGPGGGGAP) is disordered. Over residues 174–188 (PGAGGTPGGPGGGGA) the composition is skewed to gly residues. The chain crosses the membrane as a helical span at residues 248 to 268 (ILTWSVLCCASTFFTVTTYLV). Over 269–279 (DMQRFRYPERP) the chain is Cytoplasmic. A helical membrane pass occupies residues 280–300 (IIFLSGCYTMVSVAYIAGFVL). Topologically, residues 301–327 (QERVVCNERFSEDGYRTVVQGTKKEGC) are extracellular. The helical transmembrane segment at 328 to 348 (TILFMMLYFFSMASSIWWVIL) threads the bilayer. Topologically, residues 349-370 (SLTWFLAAGMKWGHEAIEANSQ) are cytoplasmic. A helical membrane pass occupies residues 371–391 (YFHLAAWAVPAVKTITILAMG). The Extracellular segment spans residues 392 to 414 (QIDGDLLSGVCFVGLNSLDPLRG). Residues 415 to 435 (FVLAPLFVYLFIGTSFLLAGF) form a helical membrane-spanning segment. Residues 436 to 461 (VSLFRIRTIMKHDGTKTEKLERLMVR) are Cytoplasmic-facing. A helical transmembrane segment spans residues 462–482 (IGVFSVLYTVPATIVIACYFY). The Extracellular portion of the chain corresponds to 483–519 (EQAFREHWERSWVSQHCKSLAIPCPAHYTPRMSPDFT). Residues 520–540 (VYMIKYLMTLIVGITSGFWIW) form a helical membrane-spanning segment. Residues 541–565 (SGKTLHSWRKFYTRLTNSRHGETTV) lie on the Cytoplasmic side of the membrane. A Lys-Thr-X-X-X-Trp motif, mediates interaction with the PDZ domain of Dvl family members motif is present at residues 543 to 548 (KTLHSW). The short motif at 563 to 565 (TTV) is the PDZ-binding element.

It belongs to the G-protein coupled receptor Fz/Smo family. As to quaternary structure, (Microbial infection) Interacts with C.difficile toxin TcdB; frizzled receptors constitute the major host receptors for TcdB in the colonic epithelium. Post-translationally, ubiquitinated by ZNRF3, leading to its degradation by the proteasome. In terms of tissue distribution, widely expressed. In the adult, mainly found in heart, placenta, skeletal muscle, lung, kidney, pancreas, prostate, testis, ovary and colon. In the fetus, expressed in brain, lung and kidney. Low levels in fetal liver.

The protein resides in the membrane. It is found in the cell membrane. Functionally, receptor for Wnt proteins. Most of frizzled receptors are coupled to the beta-catenin canonical signaling pathway, which leads to the activation of disheveled proteins, inhibition of GSK-3 kinase, nuclear accumulation of beta-catenin and activation of Wnt target genes. A second signaling pathway involving PKC and calcium fluxes has been seen for some family members, but it is not yet clear if it represents a distinct pathway or if it can be integrated in the canonical pathway, as PKC seems to be required for Wnt-mediated inactivation of GSK-3 kinase. Both pathways seem to involve interactions with G-proteins. May be involved in transduction and intercellular transmission of polarity information during tissue morphogenesis and/or in differentiated tissues. (Microbial infection) Acts as a receptor for C.difficile toxin TcdB in the colonic epithelium. TcdB occupies the binding site for Wnt-adducted palmitoleate in frizzled receptors and TcdB-binding prevents Wnt-binding and downstream Wnt signaling. The chain is Frizzled-2 (FZD2) from Homo sapiens (Human).